The following is a 228-amino-acid chain: 7-cyano-7-deazaguanine synthase (228 aa).

11-21 (LSGGLDSATVL) provides a ligand contact to ATP. Zn(2+) is bound by residues Cys-191, Cys-201, Cys-204, and Cys-207.

The protein belongs to the QueC family. It depends on Zn(2+) as a cofactor.

It carries out the reaction 7-carboxy-7-deazaguanine + NH4(+) + ATP = 7-cyano-7-deazaguanine + ADP + phosphate + H2O + H(+). It functions in the pathway purine metabolism; 7-cyano-7-deazaguanine biosynthesis. In terms of biological role, catalyzes the ATP-dependent conversion of 7-carboxy-7-deazaguanine (CDG) to 7-cyano-7-deazaguanine (preQ(0)). In Magnetococcus marinus (strain ATCC BAA-1437 / JCM 17883 / MC-1), this protein is 7-cyano-7-deazaguanine synthase.